Reading from the N-terminus, the 261-residue chain is CD40 ligand (261 aa).

Over 1–22 (MVETYHQPAPRSAATGLPVSMK) the chain is Cytoplasmic. The helical; Signal-anchor for type II membrane protein transmembrane segment at 23–43 (IFMYLLTVFLITQMIGSALFA) threads the bilayer. Residues 44–261 (VYLHRRLDKI…GFTSFGLLKL (218 aa)) lie on the Extracellular side of the membrane. The region spanning 122 to 261 (IAAHVISEAS…GFTSFGLLKL (140 aa)) is the THD domain. Cysteines 178 and 218 form a disulfide. Asn-240 carries N-linked (GlcNAc...) asparagine glycosylation.

It belongs to the tumor necrosis factor family. Homotrimer. Interacts with CD28. CD40 ligand, soluble form: Exists as either a monomer or a homotrimer. Forms a ternary complex between CD40 and integrins for CD40-CD40LG signaling. The soluble form derives from the membrane form by proteolytic processing.

The protein localises to the cell membrane. The protein resides in the cell surface. It localises to the secreted. Functionally, cytokine that acts as a ligand to CD40/TNFRSF5. Costimulates T-cell proliferation and cytokine production. Its cross-linking on T-cells generates a costimulatory signal which enhances the production of IL4 and IL10 in conjunction with the TCR/CD3 ligation and CD28 costimulation. Induces the activation of NF-kappa-B. Induces the activation of kinases MAPK8 and PAK2 in T-cells. Mediates B-cell proliferation in the absence of co-stimulus as well as IgE production in the presence of IL4. Involved in immunoglobulin class switching. Its function is as follows. Acts as a ligand for integrins, specifically ITGA5:ITGB1 and ITGAV:ITGB3; both integrins and the CD40 receptor are required for activation of CD40-CD40LG signaling, which have cell-type dependent effects, such as B-cell activation, NF-kappa-B signaling and anti-apoptotic signaling. This is CD40 ligand (CD40LG) from Aotus trivirgatus (Three-striped night monkey).